A 56-amino-acid polypeptide reads, in one-letter code: Lantibiotic subtilin (56 aa).

Positions 1 to 24 are excised as a propeptide; that stretch reads MSKFDDFDLDVVKVSKQDSKITPQ. At tryptophan 25 the chain carries N2-succinyltryptophan; partial. The segment at residues 27–31 is a cross-link (lanthionine (Ser-Cys)); that stretch reads SESLC. Serine 29 carries the post-translational modification 2,3-didehydroalanine (Ser). 4 consecutive cross-links (beta-methyllanthionine (Thr-Cys)) follow at residues 32-35, 37-43, 47-50, and 49-52; these read TPGC, TGALQTC, TLTC, and TCNC. Residue threonine 42 is modified to (Z)-2,3-didehydrobutyrine. Serine 55 is modified (2,3-didehydroalanine (Ser)).

It belongs to the type A lantibiotic family. In terms of processing, maturation of lantibiotics involves the enzymatic conversion of Thr, and Ser into dehydrated AA and the formation of thioether bonds with cysteine. This is followed by membrane translocation and cleavage of the modified precursor. Post-translationally, succinylated subtilin is 10-20 times less active than subtilin. The ratio subtilin/succinylated subtilin is about 1:2 after 24 hours growth. The 2,3-didehydrobutyrine is determined to be the Z-isomer.

Functionally, lanthionine-containing peptide antibiotic (lantibiotic) active on Gram-positive bacteria. The bactericidal activity of lantibiotics is based on depolarization of energized bacterial cytoplasmic membranes, initiated by the formation of aqueous transmembrane pores. This is Lantibiotic subtilin (spaS) from Bacillus subtilis.